We begin with the raw amino-acid sequence, 477 residues long: 3-isopropylmalate dehydratase large subunit (477 aa).

3 residues coordinate [4Fe-4S] cluster: cysteine 352, cysteine 413, and cysteine 416.

It belongs to the aconitase/IPM isomerase family. LeuC type 1 subfamily. In terms of assembly, heterodimer of LeuC and LeuD. [4Fe-4S] cluster is required as a cofactor.

The catalysed reaction is (2R,3S)-3-isopropylmalate = (2S)-2-isopropylmalate. Its pathway is amino-acid biosynthesis; L-leucine biosynthesis; L-leucine from 3-methyl-2-oxobutanoate: step 2/4. Functionally, catalyzes the isomerization between 2-isopropylmalate and 3-isopropylmalate, via the formation of 2-isopropylmaleate. The chain is 3-isopropylmalate dehydratase large subunit from Pseudomonas putida (strain ATCC 47054 / DSM 6125 / CFBP 8728 / NCIMB 11950 / KT2440).